The chain runs to 149 residues: Large ribosomal subunit protein uL15 (149 aa).

A disordered region spans residues 30–63; that stretch reads GLGKTAGRGHKGSFARKGGGKIKPGFEGGQTPMQ. Basic residues predominate over residues 36–49; sequence GRGHKGSFARKGGG.

The protein belongs to the universal ribosomal protein uL15 family. As to quaternary structure, part of the 50S ribosomal subunit.

Binds to the 23S rRNA. The polypeptide is Large ribosomal subunit protein uL15 (Xylella fastidiosa (strain 9a5c)).